The chain runs to 598 residues: DNA (cytosine-5)-methyltransferase DRM2 (598 aa).

2 disordered regions span residues 1-49 (MVDW…NGKA) and 114-146 (EVDE…GDED). Positions 42 to 91 (PQDANGKANGSGALVAEFMGMGFPKEMILKAIKEIGDTDTEQLLELLLTY) constitute a UBA 1 domain. Positions 114 to 128 (EVDEEEDDTNWDEYD) are enriched in acidic residues. One can recognise a UBA 2 domain in the interval 150–194 (EMSEKDEKMKSLVNMGFPEDEAKMAIDRCGLDAPVAVLVDSIYAS). Residues 227 to 252 (GSKKRKRYGSGPSGNQVPFDGSHEEP) form a disordered region. The region spanning 272-598 (VHRNLPDQAL…EHVKATMSAV (327 aa)) is the SAM-dependent MTase DRM-type domain.

It belongs to the class I-like SAM-binding methyltransferase superfamily. DRM-methyltransferase family. Interacts (via UBA domains) with EIF4A.

The protein resides in the nucleus. It catalyses the reaction a 2'-deoxycytidine in DNA + S-adenosyl-L-methionine = a 5-methyl-2'-deoxycytidine in DNA + S-adenosyl-L-homocysteine + H(+). Its function is as follows. Involved in de novo DNA methylation. Required for CpG and non-CpG methylation. Required for normal establishment and maintenance of RNA-directed DNA methylation (RdDM) mediated by small interfering RNAs (siRNAs). Regulates proper plant development in both vegetative and reproductive stages through DNA methylation. This is DNA (cytosine-5)-methyltransferase DRM2 from Oryza sativa subsp. japonica (Rice).